Reading from the N-terminus, the 111-residue chain is UPF0321 protein P20C8.02c (111 aa).

The first 17 residues, 1–17 (MLLLFCICCVFIKLVLA), serve as a signal peptide directing secretion. Asparagine 20 carries N-linked (GlcNAc...) asparagine glycosylation.

The protein belongs to the UPF0321 family.

The sequence is that of UPF0321 protein P20C8.02c from Schizosaccharomyces pombe (strain 972 / ATCC 24843) (Fission yeast).